We begin with the raw amino-acid sequence, 476 residues long: Eukaryotic translation initiation factor 3 subunit L (476 aa).

The region spanning 257–452 is the PCI domain; sequence DAIRMFSHIL…DLDYALENDL (196 aa).

This sequence belongs to the eIF-3 subunit L family. Component of the eukaryotic translation initiation factor 3 (eIF-3) complex.

It is found in the cytoplasm. Component of the eukaryotic translation initiation factor 3 (eIF-3) complex, which is involved in protein synthesis of a specialized repertoire of mRNAs and, together with other initiation factors, stimulates binding of mRNA and methionyl-tRNAi to the 40S ribosome. The eIF-3 complex specifically targets and initiates translation of a subset of mRNAs involved in cell proliferation. This Aspergillus clavatus (strain ATCC 1007 / CBS 513.65 / DSM 816 / NCTC 3887 / NRRL 1 / QM 1276 / 107) protein is Eukaryotic translation initiation factor 3 subunit L.